The following is a 208-amino-acid chain: Holliday junction resolvase RecU (208 aa).

Residues 1-25 are disordered; the sequence is MNYPNGKPFNRNKTKVGRTNDHKSS. Thr-87, Asp-89, Glu-102, and Gln-121 together coordinate Mg(2+).

The protein belongs to the RecU family. Mg(2+) serves as cofactor.

It localises to the cytoplasm. It carries out the reaction Endonucleolytic cleavage at a junction such as a reciprocal single-stranded crossover between two homologous DNA duplexes (Holliday junction).. In terms of biological role, endonuclease that resolves Holliday junction intermediates in genetic recombination. Cleaves mobile four-strand junctions by introducing symmetrical nicks in paired strands. Promotes annealing of linear ssDNA with homologous dsDNA. Required for DNA repair, homologous recombination and chromosome segregation. The chain is Holliday junction resolvase RecU from Staphylococcus carnosus (strain TM300).